A 453-amino-acid polypeptide reads, in one-letter code: Phosphoglucosamine mutase (453 aa).

The Phosphoserine intermediate role is filled by Ser-109. Mg(2+) is bound by residues Ser-109, Asp-246, Asp-248, and Asp-250. The residue at position 109 (Ser-109) is a Phosphoserine.

This sequence belongs to the phosphohexose mutase family. The cofactor is Mg(2+). Post-translationally, activated by phosphorylation.

It carries out the reaction alpha-D-glucosamine 1-phosphate = D-glucosamine 6-phosphate. Catalyzes the conversion of glucosamine-6-phosphate to glucosamine-1-phosphate. The chain is Phosphoglucosamine mutase from Leifsonia xyli subsp. xyli (strain CTCB07).